The sequence spans 1230 residues: ATP-dependent helicase/nuclease subunit A (1230 aa).

One can recognise a UvrD-like helicase ATP-binding domain in the interval 9-480; the sequence is STWTDDQWKA…IDLNKNFRSR (472 aa). 30-37 provides a ligand contact to ATP; that stretch reads AAAGSGKT. Positions 507-796 constitute a UvrD-like helicase C-terminal domain; the sequence is QAELKLGASY…RLMTIHSSKG (290 aa).

The protein belongs to the helicase family. AddA subfamily. As to quaternary structure, heterodimer of AddA and AddB/RexB. The cofactor is Mg(2+).

The catalysed reaction is Couples ATP hydrolysis with the unwinding of duplex DNA by translocating in the 3'-5' direction.. The enzyme catalyses ATP + H2O = ADP + phosphate + H(+). Functionally, the heterodimer acts as both an ATP-dependent DNA helicase and an ATP-dependent, dual-direction single-stranded exonuclease. Recognizes the chi site generating a DNA molecule suitable for the initiation of homologous recombination. The AddA nuclease domain is required for chi fragment generation; this subunit has the helicase and 3' -&gt; 5' nuclease activities. The sequence is that of ATP-dependent helicase/nuclease subunit A from Bacillus licheniformis (strain ATCC 14580 / DSM 13 / JCM 2505 / CCUG 7422 / NBRC 12200 / NCIMB 9375 / NCTC 10341 / NRRL NRS-1264 / Gibson 46).